We begin with the raw amino-acid sequence, 1138 residues long: BMP-2-inducible protein kinase (1138 aa).

Position 13 is a phosphoserine (Ser-13). Positions 48–313 (VTLEESLAEG…DIFQVSYFAF (266 aa)) constitute a Protein kinase domain. ATP-binding positions include 54–62 (LAEGGFSTV) and Lys-76. Asp-177 functions as the Proton acceptor in the catalytic mechanism. Disordered stretches follow at residues 355–435 (TDTI…RVLQ), 638–831 (NRLG…PADA), and 906–1018 (PRSV…EFLT). Polar residues predominate over residues 358-390 (IGPTETSIAPRQRPKANSTAATSSVLTIQSSAT). A compositionally biased stretch (low complexity) spans 417-435 (VLMVQGPPQQPPQQHRVLQ). At Ser-676 the chain carries Phosphoserine. The span at 684–701 (HSPNQKSITANLTKNGGS) shows a compositional bias: polar residues. The segment covering 706 to 715 (KDQRAGKKTS) has biased composition (basic and acidic residues). Phosphoserine occurs at positions 733, 806, and 807. Residues 787–813 (DKHSSDSECEQAKTKRGDTSSLRRDKP) are compositionally biased toward basic and acidic residues. Position 819 is a phosphothreonine (Thr-819). Ser-908 is modified (phosphoserine). Residues 915-926 (TPFQPFSVSASK) are compositionally biased toward polar residues. Basic residues predominate over residues 951–965 (VKQRSLQKLSSRQRR). 7 positions are modified to phosphoserine: Ser-1010, Ser-1012, Ser-1013, Ser-1020, Ser-1022, Ser-1087, and Ser-1091. Residues 1117–1138 (TPQQSQPVELDPFGAAPFPSKQ) form a disordered region.

The protein belongs to the protein kinase superfamily. Ser/Thr protein kinase family. Autophosphorylated. In terms of tissue distribution, expressed in osteocytes and osteoblasts.

The protein resides in the nucleus. The catalysed reaction is L-seryl-[protein] + ATP = O-phospho-L-seryl-[protein] + ADP + H(+). It carries out the reaction L-threonyl-[protein] + ATP = O-phospho-L-threonyl-[protein] + ADP + H(+). Its function is as follows. May be involved in osteoblast differentiation. In Mus musculus (Mouse), this protein is BMP-2-inducible protein kinase (Bmp2k).